A 347-amino-acid chain; its full sequence is uncharacterized protein (347 aa).

The RING-type zinc finger occupies 5 to 44 (CTICHNTPNRPVRLDCNHEFCYICIKGSIQNDMLNCAVCR). A WWE domain is found at 244 to 321 (NVQANFNVAR…NLDAWRQIKR (78 aa)).

This is an uncharacterized protein from Caenorhabditis elegans.